The sequence spans 775 residues: Ribonucleoside-diphosphate reductase large subunit (775 aa).

Substrate contacts are provided by residues T200, 215–216 (SC), G246, 427–431 (NLCTE), and 606–610 (PTVSS). Cysteines 216 and 444 form a disulfide. The active-site Proton acceptor is the N427. The Cysteine radical intermediate role is filled by C429. E431 functions as the Proton acceptor in the catalytic mechanism.

This sequence belongs to the ribonucleoside diphosphate reductase large chain family. Heterotetramer composed of a homodimer of the large subunit (R1) and a homodimer of the small subunit (R2). Larger multisubunit protein complex are also active, composed of (R1)n(R2)n.

It carries out the reaction a 2'-deoxyribonucleoside 5'-diphosphate + [thioredoxin]-disulfide + H2O = a ribonucleoside 5'-diphosphate + [thioredoxin]-dithiol. In terms of biological role, ribonucleoside-diphosphate reductase holoenzyme provides the precursors necessary for viral DNA synthesis. Allows virus growth in non-dividing cells, as well as reactivation from latency in infected hosts. Catalyzes the biosynthesis of deoxyribonucleotides from the corresponding ribonucleotides. This is Ribonucleoside-diphosphate reductase large subunit from Homo sapiens (Human).